The primary structure comprises 168 residues: Sec-independent protein translocase protein TatB (168 aa).

The helical transmembrane segment at 1–21 threads the bilayer; it reads MIDLGISKLALIGAVALIVIG. Disordered stretches follow at residues 92–132 and 146–168; these read FDGS…QGAR and VQSG…SFFE. The span at 94–107 shows a compositional bias: low complexity; sequence GSASSSSSSDTGSG. The segment covering 117–126 has biased composition (basic residues); sequence KSHNGRKSWR.

The protein belongs to the TatB family. In terms of assembly, the Tat system comprises two distinct complexes: a TatABC complex, containing multiple copies of TatA, TatB and TatC subunits, and a separate TatA complex, containing only TatA subunits. Substrates initially bind to the TatABC complex, which probably triggers association of the separate TatA complex to form the active translocon.

The protein resides in the cell inner membrane. In terms of biological role, part of the twin-arginine translocation (Tat) system that transports large folded proteins containing a characteristic twin-arginine motif in their signal peptide across membranes. Together with TatC, TatB is part of a receptor directly interacting with Tat signal peptides. TatB may form an oligomeric binding site that transiently accommodates folded Tat precursor proteins before their translocation. This chain is Sec-independent protein translocase protein TatB, found in Cupriavidus metallidurans (strain ATCC 43123 / DSM 2839 / NBRC 102507 / CH34) (Ralstonia metallidurans).